The primary structure comprises 822 residues: Phenylalanine--tRNA ligase beta subunit (822 aa).

Residues 44 to 162 (LSKNTNLVVG…DQIALGSNAL (119 aa)) enclose the tRNA-binding domain. Residues 201-224 (QSSNNNQETKSTNYKTKNSEDQTN) form a disordered region. In terms of domain architecture, B5 spans 430-513 (RTNPTISLNL…RLYGCHKLPP (84 aa)). The Mg(2+) site is built by D491, D497, and D501. In terms of domain architecture, FDX-ACB spans 730–822 (PKFPTVIRDL…LIKHFHIEIR (93 aa)).

Belongs to the phenylalanyl-tRNA synthetase beta subunit family. Type 1 subfamily. In terms of assembly, tetramer of two alpha and two beta subunits. It depends on Mg(2+) as a cofactor.

Its subcellular location is the cytoplasm. The enzyme catalyses tRNA(Phe) + L-phenylalanine + ATP = L-phenylalanyl-tRNA(Phe) + AMP + diphosphate + H(+). The sequence is that of Phenylalanine--tRNA ligase beta subunit from Onion yellows phytoplasma (strain OY-M).